A 117-amino-acid polypeptide reads, in one-letter code: Large ribosomal subunit protein bL20 (117 aa).

This sequence belongs to the bacterial ribosomal protein bL20 family.

Its function is as follows. Binds directly to 23S ribosomal RNA and is necessary for the in vitro assembly process of the 50S ribosomal subunit. It is not involved in the protein synthesizing functions of that subunit. The protein is Large ribosomal subunit protein bL20 of Rickettsia akari (strain Hartford).